The following is a 179-amino-acid chain: MARLREFYKETVVPELVKQFGYKSVMEVPRIEKITLNMGVGEAVADKKVMEHAVSDLERIAGQRPVVTVARKSIAGFKIRDNYPVGCKVTLRRDQMFEFLDRLITIALPRVRDFRGVSGKSFDGRGNYNMGVREQIIFPEIEYDKIDALRGLNITITTTAKTDEEAKALLSLFKFPFKG.

It belongs to the universal ribosomal protein uL5 family. In terms of assembly, part of the 50S ribosomal subunit; part of the 5S rRNA/L5/L18/L25 subcomplex. Contacts the 5S rRNA and the P site tRNA. Forms a bridge to the 30S subunit in the 70S ribosome.

Functionally, this is one of the proteins that bind and probably mediate the attachment of the 5S RNA into the large ribosomal subunit, where it forms part of the central protuberance. In the 70S ribosome it contacts protein S13 of the 30S subunit (bridge B1b), connecting the 2 subunits; this bridge is implicated in subunit movement. Contacts the P site tRNA; the 5S rRNA and some of its associated proteins might help stabilize positioning of ribosome-bound tRNAs. This Neisseria gonorrhoeae (strain ATCC 700825 / FA 1090) protein is Large ribosomal subunit protein uL5.